Here is an 814-residue protein sequence, read N- to C-terminus: Protein kintoun (814 aa).

Low complexity predominate over residues 234–246; it reads AANTARSPASPAP. 2 disordered regions span residues 234-259 and 357-490; these read AANTARSPASPAPEAVQRPEPTEPRC and ARQE…MGDP. The segment covering 388-404 has biased composition (basic and acidic residues); the sequence is AAREESADGTGADHGEK. Residues Ser444 and Ser618 each carry the phosphoserine modification. Positions 654–686 are disordered; sequence AGLQGKGKGVREGCPLSEAEAADQSATSPAASD. The segment covering 675–686 has biased composition (low complexity); the sequence is ADQSATSPAASD.

The protein belongs to the PIH1 family. Kintoun subfamily. Interacts with DNAI2 and HSPA1A. Interacts with CFAP300. Interacts with DNAAF4. Interacts with DNAAF6/PIH1D3. In terms of tissue distribution, expressed in nearly all organs of adult, with higher expression in tissues known to have motile cilia and flagella, such as brain and testis.

The protein resides in the cytoplasm. Its subcellular location is the dynein axonemal particle. Its function is as follows. Required for cytoplasmic pre-assembly of axonemal dyneins, thereby playing a central role in motility in cilia and flagella. Involved in pre-assembly of dynein arm complexes in the cytoplasm before intraflagellar transport loads them for the ciliary compartment. In Mus musculus (Mouse), this protein is Protein kintoun.